The primary structure comprises 438 residues: Exodeoxyribonuclease 7 large subunit (438 aa).

Residues 406-438 are disordered; the sequence is ATSTGPTDDIPSSAARLPASPAPDARPASGPES.

It belongs to the XseA family. Heterooligomer composed of large and small subunits.

Its subcellular location is the cytoplasm. The enzyme catalyses Exonucleolytic cleavage in either 5'- to 3'- or 3'- to 5'-direction to yield nucleoside 5'-phosphates.. Bidirectionally degrades single-stranded DNA into large acid-insoluble oligonucleotides, which are then degraded further into small acid-soluble oligonucleotides. This Clavibacter sepedonicus (Clavibacter michiganensis subsp. sepedonicus) protein is Exodeoxyribonuclease 7 large subunit.